The primary structure comprises 259 residues: Probable WRKY transcription factor 65 (259 aa).

Residues 1 to 17 (MKRGLDMARSYNDHESS) are compositionally biased toward basic and acidic residues. Disordered regions lie at residues 1–101 (MKRG…RCSS) and 126–165 (TSEH…EEED). The span at 18–31 (QETGPESPNSSTFN) shows a compositional bias: polar residues. Positions 47–69 (RSVEKRVVNVPMKEMEGSRHKGD) are enriched in basic and acidic residues. Residues 68–134 (GDTTPPSDSW…YTSEHNHPWP (67 aa)) constitute a DNA-binding region (WRKY). Over residues 154 to 165 (EPEVEPEAEEED) the composition is skewed to acidic residues.

It localises to the nucleus. Functionally, transcription factor. Interacts specifically with the W box (5'-(T)TGAC[CT]-3'), a frequently occurring elicitor-responsive cis-acting element. This Arabidopsis thaliana (Mouse-ear cress) protein is Probable WRKY transcription factor 65 (WRKY65).